We begin with the raw amino-acid sequence, 201 residues long: MSKVLVLKSSILAGYSQSGQLTDYFIEQWREKHVADEITVRDLAANPVPVLDGELVGAMRPGDAPLTPRQQDALALSDELIAELKAHDVIVIAAPMYNFNIPTQLKNYFDLIARAGVTFRYTEKGPEGLVTGKRAVVLSSRGGIHKDTPTDLIAPYLKVFLGFIGITDVNFVFAEGIAYGPEVAAKAQSDAKAAIDSVVAA.

FMN is bound by residues Ser-10, 16 to 18 (SQS), 96 to 99 (MYNF), and 140 to 143 (SRGG).

The protein belongs to the azoreductase type 1 family. As to quaternary structure, homodimer. FMN serves as cofactor.

The catalysed reaction is 2 a quinone + NADH + H(+) = 2 a 1,4-benzosemiquinone + NAD(+). The enzyme catalyses N,N-dimethyl-1,4-phenylenediamine + anthranilate + 2 NAD(+) = 2-(4-dimethylaminophenyl)diazenylbenzoate + 2 NADH + 2 H(+). Its function is as follows. Quinone reductase that provides resistance to thiol-specific stress caused by electrophilic quinones. In terms of biological role, also exhibits azoreductase activity. Catalyzes the reductive cleavage of the azo bond in aromatic azo compounds to the corresponding amines. The sequence is that of FMN-dependent NADH:quinone oxidoreductase from Salmonella arizonae (strain ATCC BAA-731 / CDC346-86 / RSK2980).